Reading from the N-terminus, the 21-residue chain is Sarafotoxin-D (21 aa).

2 disulfide bridges follow: Cys-1/Cys-15 and Cys-3/Cys-11.

It belongs to the endothelin/sarafotoxin family. As to expression, expressed by the venom gland.

It is found in the secreted. Its function is as follows. Vasoconstrictor activity. These toxins cause cardiac arrest probably as a result of coronary vasospasm. May act by displaying agonistic activities towards endothelin-1 and -2 receptors (EDNRA and EDNRB). The sequence is that of Sarafotoxin-D from Atractaspis engaddensis (Israeli burrowing asp).